The following is a 328-amino-acid chain: Biotin synthase (328 aa).

In terms of domain architecture, Radical SAM core spans 48-277 (FVGNEVHLCS…GKRITVCGGR (230 aa)). Residues C66, C70, and C73 each contribute to the [4Fe-4S] cluster site. The [2Fe-2S] cluster site is built by S142 and C202.

It belongs to the radical SAM superfamily. Biotin synthase family. As to quaternary structure, homodimer. The cofactor is [4Fe-4S] cluster. [2Fe-2S] cluster is required as a cofactor.

It catalyses the reaction (4R,5S)-dethiobiotin + (sulfur carrier)-SH + 2 reduced [2Fe-2S]-[ferredoxin] + 2 S-adenosyl-L-methionine = (sulfur carrier)-H + biotin + 2 5'-deoxyadenosine + 2 L-methionine + 2 oxidized [2Fe-2S]-[ferredoxin]. Its pathway is cofactor biosynthesis; biotin biosynthesis; biotin from 7,8-diaminononanoate: step 2/2. Catalyzes the conversion of dethiobiotin (DTB) to biotin by the insertion of a sulfur atom into dethiobiotin via a radical-based mechanism. This Citrifermentans bemidjiense (strain ATCC BAA-1014 / DSM 16622 / JCM 12645 / Bem) (Geobacter bemidjiensis) protein is Biotin synthase.